Consider the following 274-residue polypeptide: MRKVAIYGKGGIGKSTTTQNTVAGLAEMGKKVMVVGCDPKADSTRLLLGGLQQKTVLDTLREEGEEVELEDIIKEGYRNTRCTESGGPEPGVGCAGRGIITSVNLLEQLGAYDEEWDLDYVFYDVLGDVVCGGFAMPIRDGKAEEIYIVCSGEMMAMYAANNICKGILKYADAGGVRLGGLICNSRKVDNEREMIEELAKKIGTQMIHFVPRDNFVQRAEINRKTVIDYDPTHGQADEYRALARKIDENEMFVIPKPLEIEELESLLIEFGIAN.

ATP is bound at residue 8-15 (GKGGIGKS). Cys-94 provides a ligand contact to [4Fe-4S] cluster. Arg-97 bears the ADP-ribosylarginine; by dinitrogenase reductase ADP-ribosyltransferase mark. Residue Cys-131 coordinates [4Fe-4S] cluster.

Belongs to the NifH/BchL/ChlL family. Homodimer. The cofactor is [4Fe-4S] cluster. The reversible ADP-ribosylation of Arg-97 inactivates the nitrogenase reductase and regulates nitrogenase activity.

It carries out the reaction N2 + 8 reduced [2Fe-2S]-[ferredoxin] + 16 ATP + 16 H2O = H2 + 8 oxidized [2Fe-2S]-[ferredoxin] + 2 NH4(+) + 16 ADP + 16 phosphate + 6 H(+). The key enzymatic reactions in nitrogen fixation are catalyzed by the nitrogenase complex, which has 2 components: the iron protein and the molybdenum-iron protein. In Chlorobium limicola (strain DSM 245 / NBRC 103803 / 6330), this protein is Nitrogenase iron protein.